The chain runs to 105 residues: Circadian clock oscillator protein KaiB (105 aa).

This sequence belongs to the KaiB family. The KaiABC complex composition changes during the circadian cycle to control KaiC phosphorylation. Complexes KaiC(6), KaiA(2-4):KaiC(6), KaiB(6):KaiC(6) and KaiC(6):KaiB(6):KaiA(12) are among the most important forms, many form cooperatively. Undergoes a major conformational rearrangment; in the free state forms homotetramers as a dimer of dimers. When bound to the CI domain of KaiC switches to a monomeric thioredoxin-fold (KaiB(fs)). KaiB(fs) binds CikA, leading it to dephosphorylate phospho-RpaA.

In terms of biological role, key component of the KaiABC oscillator complex, which constitutes the main circadian regulator in cyanobacteria. Complex composition changes during the circadian cycle to control KaiC phosphorylation. KaiA stimulates KaiC autophosphorylation, while KaiB sequesters KaiA, leading to KaiC autodephosphorylation. Phospho-Ser-431 KaiC accumulation triggers binding of KaiB to form the KaiB(6):KaiC(6) complex, leading to changes in output regulators CikA and SasA. KaiB switches to a thioredoxin-like fold (KaiB(fs)) when bound to KaiC. KaiB(6):KaiC(6) formation exposes a site for KaiA binding that sequesters KaiA from KaiC, making the KaiC(6):KaiB(6):KaiA(12) complex that results in KaiC autodephosphorylation. A metamorphic protein which reversibly switches between an inactive tetrameric fold and a rare, thioredoxin-like monomeric fold (KaiB(fs)). KaiB(fs) binds phospho-KaiC, KaiA and CikA. KaiA and CikA compete for binding to KaiB(fs), and KaiB(fs) and SasA compete for binding to KaiC, thus the clock oscillator and output signal pathway are tightly coupled. This is Circadian clock oscillator protein KaiB from Cyanothece sp. (strain PCC 7425 / ATCC 29141).